A 216-amino-acid chain; its full sequence is UPF0502 protein PFL_4004 (216 aa).

It belongs to the UPF0502 family.

The chain is UPF0502 protein PFL_4004 from Pseudomonas fluorescens (strain ATCC BAA-477 / NRRL B-23932 / Pf-5).